The following is a 211-amino-acid chain: MRLTAKQVTWLKVCLHLAGLLPFLWLVWAINHGGLGADPVKDIQHFTGRTALKFLLATLLITPLARYAKQPLLIRTRRLLGLWCFAWATLHLTSYALLELGVNNLALLGKELITRPYLTLGIISWVILLALAFTSTQAMQRKLGKHWQQLHNFVYLVAILAPIHYLWSVKIISPQPLIYAGLAVLLLALRYKKLRSLFNRLRKQVHNKLSV.

4 helical membrane passes run 10-30 (WLKV…VWAI), 82-102 (LWCF…ELGV), 116-136 (PYLT…FTST), and 153-173 (FVYL…KIIS).

The protein belongs to the MsrQ family. Heterodimer of a catalytic subunit (MsrP) and a heme-binding subunit (MsrQ). FMN serves as cofactor. It depends on heme b as a cofactor.

Its subcellular location is the cell inner membrane. Its function is as follows. Part of the MsrPQ system that repairs oxidized periplasmic proteins containing methionine sulfoxide residues (Met-O), using respiratory chain electrons. Thus protects these proteins from oxidative-stress damage caused by reactive species of oxygen and chlorine generated by the host defense mechanisms. MsrPQ is essential for the maintenance of envelope integrity under bleach stress, rescuing a wide series of structurally unrelated periplasmic proteins from methionine oxidation, including the primary periplasmic chaperone SurA and the lipoprotein Pal. MsrQ provides electrons for reduction to the reductase catalytic subunit MsrP, using the quinone pool of the respiratory chain. The chain is Protein-methionine-sulfoxide reductase heme-binding subunit MsrQ from Shigella dysenteriae serotype 1 (strain Sd197).